The sequence spans 101 residues: Urease subunit gamma (101 aa).

This sequence belongs to the urease gamma subunit family. Heterotrimer of UreA (gamma), UreB (beta) and UreC (alpha) subunits. Three heterotrimers associate to form the active enzyme.

The protein localises to the cytoplasm. It carries out the reaction urea + 2 H2O + H(+) = hydrogencarbonate + 2 NH4(+). Its pathway is nitrogen metabolism; urea degradation; CO(2) and NH(3) from urea (urease route): step 1/1. The polypeptide is Urease subunit gamma (Ureaplasma urealyticum (Ureaplasma urealyticum biotype 2)).